The primary structure comprises 204 residues: Ribonuclease HII (204 aa).

Positions 8–197 (RLICGVDEAG…VRELLQNPPL (190 aa)) constitute an RNase H type-2 domain. D14, E15, and D106 together coordinate a divalent metal cation.

Belongs to the RNase HII family. Requires Mn(2+) as cofactor. Mg(2+) serves as cofactor.

The protein resides in the cytoplasm. The enzyme catalyses Endonucleolytic cleavage to 5'-phosphomonoester.. Its function is as follows. Endonuclease that specifically degrades the RNA of RNA-DNA hybrids. This chain is Ribonuclease HII, found in Azoarcus sp. (strain BH72).